The primary structure comprises 51 residues: Large ribosomal subunit protein eL39 (51 aa).

The protein belongs to the eukaryotic ribosomal protein eL39 family.

This is Large ribosomal subunit protein eL39 from Methanopyrus kandleri (strain AV19 / DSM 6324 / JCM 9639 / NBRC 100938).